A 442-amino-acid polypeptide reads, in one-letter code: MYRNVTQEIFMEQTKIILDENEMPKRWYNVLSDLPSPIDPPLDPRTWQPINPEALEPIFAKELIRQEMSSDRYIDIPAEILDVYRLWRPSPLFRAHQLEKDLKTPAKIYYKYEGVSPAGSHKTNTSIAQAYYNMKEGTERLTTETGAGQWGSALSLACNYFDLECKVYMVRSSYYQKPYRKSLMTLWGGNVVPSPSPDTEFGRKILKEQPDTPGSLGIAISEAVEDAIAHDNTKYTLGSVLNHVVLHQTVIGAECKKQLEQVEEYPDVVIGCCGGGSNLGGIGLEFIKDRLEGKHNARVVAVEPSACPSLTKGEYRYDFGDTAEMTPLLKMYTLGHKHIPPAIHAGGLRYHGDSPIISKLCAEGLMEAVSYGQKEVFDAAVQFARTEGIVPAPESSHAIRCAIDEALEAKQKGEEKVILFNLSGHGHFDMASYDKYFSGELE.

Lysine 122 carries the post-translational modification N6-(pyridoxal phosphate)lysine.

This sequence belongs to the TrpB family. Tetramer of two alpha and two beta chains. The cofactor is pyridoxal 5'-phosphate.

It catalyses the reaction (1S,2R)-1-C-(indol-3-yl)glycerol 3-phosphate + L-serine = D-glyceraldehyde 3-phosphate + L-tryptophan + H2O. It participates in amino-acid biosynthesis; L-tryptophan biosynthesis; L-tryptophan from chorismate: step 5/5. In terms of biological role, the beta subunit is responsible for the synthesis of L-tryptophan from indole and L-serine. This is Tryptophan synthase beta chain 2 (trpB2) from Methanosarcina mazei (strain ATCC BAA-159 / DSM 3647 / Goe1 / Go1 / JCM 11833 / OCM 88) (Methanosarcina frisia).